Here is a 503-residue protein sequence, read N- to C-terminus: MQYRDLRDFLAQLERTGELRRVHQPVSPRLEMTEVCDRLLRSEGPAVVFAQPVDGAQKYDMPVLANLFGTTRRVALGMGAESLDELRDIGRLLSALKEPEPPRGLREAGKLWTMAKAVWDMAPRKVSSPACQEIVWEGNDVDLSRIPVQTCWPGDAAPLVTWGLVITRGPHKKRQNLGIYRQQVINRNQVIMRWLAHRGGALDFREHAIANPGQPFPIAVALGADPATILGAVTPVPDTLSEYQFAGLLRGSRTELATCLTPSLAQAQLQVPAGAEIILEGHIQPDPTHPSGYQHALEGPFGDHTGYYNEQDWFPVFTVERITMRRDPIYHSTYTGKPPDEPAVLGVALNEVFVPLLQKQFPEIADFYLPPEGCSYRMALVSMKKQYAGHAKRVMFGVWSFLRQFMYTKFIVVVDDDVNLRDWKEVIWAITTRVDPARDTVMVENTPIDYLDFASPVSGLGSKMGIDATNKWPGETTREWGQPIVMDTAVKAKVDAMWDTLFQ.

Asn176 lines the Mn(2+) pocket. Residues 179–181, 193–195, and 198–199 contribute to the prenylated FMN site; these read IYR, RWL, and RG. Glu242 contributes to the Mn(2+) binding site. The active-site Proton donor is Asp303.

It belongs to the UbiD family. In terms of assembly, homohexamer. Requires prenylated FMN as cofactor. It depends on Mn(2+) as a cofactor.

The protein localises to the cell membrane. It catalyses the reaction a 4-hydroxy-3-(all-trans-polyprenyl)benzoate + H(+) = a 2-(all-trans-polyprenyl)phenol + CO2. It participates in cofactor biosynthesis; ubiquinone biosynthesis. Its function is as follows. Catalyzes the decarboxylation of 3-octaprenyl-4-hydroxy benzoate to 2-octaprenylphenol, an intermediate step in ubiquinone biosynthesis. This Ralstonia pickettii (strain 12J) protein is 3-octaprenyl-4-hydroxybenzoate carboxy-lyase.